Reading from the N-terminus, the 1105-residue chain is Serine/threonine-protein kinase 4 homolog B (1105 aa).

The Protein kinase domain maps to 23–274; the sequence is FDLIECLGRG…AKDLLKHSFF (252 aa). ATP is bound by residues 29–37 and K52; that span reads LGRGSFGSV. Residue D142 is the Proton acceptor of the active site. Disordered regions lie at residues 348–396, 411–482, and 495–541; these read STQI…TKNN, SSSA…RQPA, and PSFG…SLPL. 2 stretches are compositionally biased toward low complexity: residues 358–396 and 411–437; these read QAQQ…TKNN and SSSA…TTTN. Residues 438–458 show a composition bias toward polar residues; it reads DYHTGNGRTSSSSPQFGLQHQ. Low complexity-rich tracts occupy residues 459-473 and 513-541; these read NSSN…TVPS and PIGS…SLPL. The segment at 516–1105 is calpain-like cysteine protease-like; it reads SPITKRPTPT…SEFDLDFYNN (590 aa). 4 domain III regions span residues 641 to 668, 791 to 830, 836 to 972, and 1076 to 1103; these read EVSA…EGSF, VHTQ…QGSI, SEQI…NVIQ, and VVIP…LDFY.

The protein in the N-terminal section; belongs to the protein kinase superfamily. STE Ser/Thr protein kinase family. STE20 subfamily. In the C-terminal section; belongs to the peptidase C2 family. Requires Mn(2+) as cofactor.

The catalysed reaction is L-seryl-[protein] + ATP = O-phospho-L-seryl-[protein] + ADP + H(+). It catalyses the reaction L-threonyl-[protein] + ATP = O-phospho-L-threonyl-[protein] + ADP + H(+). In terms of biological role, probable serine/threonine-protein kinase. The polypeptide is Serine/threonine-protein kinase 4 homolog B (krsB) (Dictyostelium discoideum (Social amoeba)).